A 1820-amino-acid chain; its full sequence is Histone-lysine N-methyltransferase, H3 lysine-9 specific (1820 aa).

Disordered regions lie at residues M1–R54, N74–T251, S284–K618, S634–V681, N804–K836, S850–W893, H911–R944, D966–A996, P1063–V1126, R1183–A1270, K1296–Q1335, and R1385–D1407. A compositionally biased stretch (low complexity) spans V11 to L31. Polar residues predominate over residues A109–Q129. The span at G152–A169 shows a compositional bias: low complexity. 2 stretches are compositionally biased toward polar residues: residues G174–N204 and S212–A222. Composition is skewed to low complexity over residues R226 to R236, S284 to T311, and T339 to A352. Residues K361 to R370 are compositionally biased toward basic and acidic residues. The segment covering S374 to G385 has biased composition (polar residues). Over residues S400 to A424 the composition is skewed to low complexity. Positions S433–H442 are enriched in polar residues. The segment covering P443–Q459 has biased composition (low complexity). Polar residues predominate over residues T479 to L510. 3 stretches are compositionally biased toward low complexity: residues P514–T531, Q551–S563, and T594–K618. Composition is skewed to polar residues over residues G643–S662 and S810–S827. The span at S850–G861 shows a compositional bias: low complexity. Residues T869–W893 are compositionally biased toward polar residues. Basic and acidic residues-rich tracts occupy residues K917–R944 and D966–K983. Residues S1076 to S1089 are compositionally biased toward low complexity. Positions K1296–L1320 are enriched in low complexity. Residues L1516–G1585 form the Pre-SET domain. The Zn(2+) site is built by C1518, C1520, C1524, C1531, C1533, C1567, C1571, C1573, and C1577. One can recognise an SET domain in the interval T1590 to K1750. Residues K1600–W1602, Y1643, R1704, and N1707–H1708 contribute to the S-adenosyl-L-methionine site. Residue C1710 coordinates Zn(2+). Residues D1756–D1794 are disordered. Positions K1765 to M1776 are enriched in basic residues. The 17-residue stretch at V1800–F1816 folds into the Post-SET domain. Residues C1804, C1806, and C1811 each contribute to the Zn(2+) site.

This sequence belongs to the class V-like SAM-binding methyltransferase superfamily. Histone-lysine methyltransferase family. Suvar3-9 subfamily.

The protein resides in the nucleus. The protein localises to the chromosome. It catalyses the reaction N(6)-methyl-L-lysyl(9)-[histone H3] + S-adenosyl-L-methionine = N(6),N(6)-dimethyl-L-lysyl(9)-[histone H3] + S-adenosyl-L-homocysteine + H(+). It carries out the reaction L-lysyl(9)-[histone H3] + S-adenosyl-L-methionine = N(6)-methyl-L-lysyl(9)-[histone H3] + S-adenosyl-L-homocysteine + H(+). Its function is as follows. Histone methyltransferase that specifically dimethylates histone H3 to form H3K9me2. H3K9me2 represents a specific tag for epigenetic transcriptional repression by recruiting HP1 proteins to methylated histones. Mainly functions in heterochromatin regions, thereby playing a central role in the establishment of constitutive heterochromatin at centromeric regions. The chain is Histone-lysine N-methyltransferase, H3 lysine-9 specific from Cryptococcus neoformans var. grubii serotype A (strain H99 / ATCC 208821 / CBS 10515 / FGSC 9487) (Filobasidiella neoformans var. grubii).